The sequence spans 155 residues: Small ribosomal subunit protein uS7cz/uS7cy (155 aa).

The protein belongs to the universal ribosomal protein uS7 family. Part of the 30S ribosomal subunit.

The protein localises to the plastid. Functionally, one of the primary rRNA binding proteins, it binds directly to 16S rRNA where it nucleates assembly of the head domain of the 30S subunit. The polypeptide is Small ribosomal subunit protein uS7cz/uS7cy (rps7-A) (Cuscuta obtusiflora (Peruvian dodder)).